Here is a 312-residue protein sequence, read N- to C-terminus: Elongation factor Ts, mitochondrial (312 aa).

The protein belongs to the EF-Ts family.

Its subcellular location is the mitochondrion. Functionally, associates with the EF-Tu.GDP complex and induces the exchange of GDP to GTP. It remains bound to the aminoacyl-tRNA.EF-Tu.GTP complex up to the GTP hydrolysis stage on the ribosome. The sequence is that of Elongation factor Ts, mitochondrial (tsfm) from Xenopus laevis (African clawed frog).